A 470-amino-acid chain; its full sequence is MAVPDKIVSELASWMKDQKLVAPQMKDATAFYRNLEEALDVRRSTQSMNTRGQNTWKDGSAIDFCSNDLLSLGRTGELRTEFLSELAKYPDFALYSGGSRVLGGNYDYIEKVEQEIADFLGAETALMFDSGFNGNVAIYTSIPRPGDAIVYDELVHLSTHTGMAASLAATKVAFRHNDIDAFREAMISVMESQPMIQDGSRSILVSVESVYSMDGDVCPLVEMLEIAREICPKKNFAFITDEAHATGIIGPKGVGLVKHLGLEKEIAVRLNTSGKALACTGSVVLGSATVRNAMLNFAGSVTNTTAPSFPSVAVVRSAYNLLRTGATQKAQDNIQHLVRYFFKSVSSHTLWDQANDMGLLSIPIIEESKDRDFVTHIVPIWTRQKYNWWLFFHLQLAKIAVVPINYPQVPKGKARLRIMIHATNTESEVDYLVSMIYGFVKEMMDIEESGEKGKIPKAAQKIYALMAANA.

Residues serine 212, histidine 244, and threonine 272 each coordinate pyridoxal 5'-phosphate. Residue lysine 275 is modified to N6-(pyridoxal phosphate)lysine.

The protein belongs to the class-II pyridoxal-phosphate-dependent aminotransferase family. BioF subfamily. Homodimer. The cofactor is pyridoxal 5'-phosphate.

It participates in secondary metabolite biosynthesis. In terms of biological role, aminoacyl transferase; part of the gene cluster that mediates the biosynthesis of sphingofungins, bioactive molecules acting as sphingolipid inhibitors via inhibiting serine palmitoyl transferase (SPT). Within the pathway, sphA transfers 2-methyl-aminomalonate and 2-hydroxymethyl-aminomalonate onto the sphB product 3-hydroxyoctadeca-4,10-dienoyl-ACP to produce the precursors of sphingofungins E and F. The substrate specificity of sphA using 2-methyl-aminomalonate and 2-hydroxymethyl-aminomalonate instread of aminomalonate is responsible for the biosynthesis of sphingofungins E and F but not B and C like in Aspergillus fumigatus. The PKS sphB does not contain any putative thioesterase domain for releasing the nascent polyketide chain and it has been suggested that aminoacyl transferases can facilitate the polyketide chain release. This is Aminoacyl transferase sphA from Byssochlamys spectabilis (Paecilomyces variotii).